Reading from the N-terminus, the 356-residue chain is 4-hydroxy-3-methylbut-2-en-1-yl diphosphate synthase (flavodoxin) (356 aa).

[4Fe-4S] cluster contacts are provided by Cys-264, Cys-267, Cys-299, and Glu-306.

This sequence belongs to the IspG family. [4Fe-4S] cluster is required as a cofactor.

It catalyses the reaction (2E)-4-hydroxy-3-methylbut-2-enyl diphosphate + oxidized [flavodoxin] + H2O + 2 H(+) = 2-C-methyl-D-erythritol 2,4-cyclic diphosphate + reduced [flavodoxin]. It participates in isoprenoid biosynthesis; isopentenyl diphosphate biosynthesis via DXP pathway; isopentenyl diphosphate from 1-deoxy-D-xylulose 5-phosphate: step 5/6. In terms of biological role, converts 2C-methyl-D-erythritol 2,4-cyclodiphosphate (ME-2,4cPP) into 1-hydroxy-2-methyl-2-(E)-butenyl 4-diphosphate. In Campylobacter lari (strain RM2100 / D67 / ATCC BAA-1060), this protein is 4-hydroxy-3-methylbut-2-en-1-yl diphosphate synthase (flavodoxin).